The primary structure comprises 101 residues: MEPVDPNLEPWKHPGSQPRTACTNCYCKKCCFHCQVCFITKGLGISYGRKKRRQRQRAPDSSQNHQDSLSKQPSSQPRGDPTGPKESKKEVERETETDPLD.

Residues 1 to 24 (MEPVDPNLEPWKHPGSQPRTACTN) are interaction with human CREBBP. Positions 1 to 48 (MEPVDPNLEPWKHPGSQPRTACTNCYCKKCCFHCQVCFITKGLGISYG) are transactivation. Residues Cys22, Cys25, and Cys27 each coordinate Zn(2+). The segment at 22–37 (CTNCYCKKCCFHCQVC) is cysteine-rich. Residue Lys28 is modified to N6-acetyllysine; by host PCAF. The Zn(2+) site is built by Cys30, His33, Cys34, and Cys37. Residues 38–48 (FITKGLGISYG) form a core region. A disordered region spans residues 48-101 (GRKKRRQRQRAPDSSQNHQDSLSKQPSSQPRGDPTGPKESKKEVERETETDPLD). Positions 49-57 (RKKRRQRQR) match the Nuclear localization signal, RNA-binding (TAR), and protein transduction motif. The interval 49–86 (RKKRRQRQRAPDSSQNHQDSLSKQPSSQPRGDPTGPKE) is interaction with the host capping enzyme RNGTT. Lys50 and Lys51 each carry N6-acetyllysine; by host EP300 and GCN5L2. Asymmetric dimethylarginine; by host PRMT6 is present on residues Arg52 and Arg53. A compositionally biased stretch (polar residues) spans 59–77 (PDSSQNHQDSLSKQPSSQP). Lys71 is covalently cross-linked (Glycyl lysine isopeptide (Lys-Gly) (interchain with G-Cter in ubiquitin)). The Cell attachment site signature appears at 78–80 (RGD). Over residues 83–101 (GPKESKKEVERETETDPLD) the composition is skewed to basic and acidic residues.

Belongs to the lentiviruses Tat family. Interacts with host CCNT1. Associates with the P-TEFb complex composed at least of Tat, P-TEFb (CDK9 and CCNT1), TAR RNA, RNA Pol II. Recruits the HATs CREBBP, TAF1/TFIID, EP300, PCAF and GCN5L2. Interacts with host KAT5/Tip60; this interaction targets the latter to degradation. Interacts with the host deacetylase SIRT1. Interacts with host capping enzyme RNGTT; this interaction stimulates RNGTT. Binds to host KDR, and to the host integrins ITGAV/ITGB3 and ITGA5/ITGB1. Interacts with host KPNB1/importin beta-1 without previous binding to KPNA1/importin alpha-1. Interacts with EIF2AK2. Interacts with host nucleosome assembly protein NAP1L1; this interaction may be required for the transport of Tat within the nucleus, since the two proteins interact at the nuclear rim. Interacts with host C1QBP/SF2P32; this interaction involves lysine-acetylated Tat. Interacts with the host chemokine receptors CCR2, CCR3 and CXCR4. Interacts with host DPP4/CD26; this interaction may trigger an anti-proliferative effect. Interacts with host LDLR. Interacts with the host extracellular matrix metalloproteinase MMP1. Interacts with host PRMT6; this interaction mediates Tat's methylation. Interacts with, and is ubiquitinated by MDM2/Hdm2. Interacts with host PSMC3 and HTATIP2. Interacts with STAB1; this interaction may overcome SATB1-mediated repression of IL2 and IL2RA (interleukin) in T cells by binding to the same domain than HDAC1. Interacts (when acetylated) with human CDK13, thereby increasing HIV-1 mRNA splicing and promoting the production of the doubly spliced HIV-1 protein Nef. Interacts with host TBP; this interaction modulates the activity of transcriptional pre-initiation complex. Interacts with host RELA. Interacts with host PLSCR1; this interaction negatively regulates Tat transactivation activity by altering its subcellular distribution. Post-translationally, asymmetrical arginine methylation by host PRMT6 seems to diminish the transactivation capacity of Tat and affects the interaction with host CCNT1. In terms of processing, acetylation by EP300, CREBBP, GCN5L2/GCN5 and PCAF regulates the transactivation activity of Tat. EP300-mediated acetylation of Lys-50 promotes dissociation of Tat from the TAR RNA through the competitive binding to PCAF's bromodomain. In addition, the non-acetylated Tat's N-terminus can also interact with PCAF. PCAF-mediated acetylation of Lys-28 enhances Tat's binding to CCNT1. Lys-50 is deacetylated by SIRT1. Polyubiquitination by host MDM2 does not target Tat to degradation, but activates its transactivation function and fosters interaction with CCNT1 and TAR RNA. Post-translationally, phosphorylated by EIF2AK2 on serine and threonine residues adjacent to the basic region important for TAR RNA binding and function. Phosphorylation of Tat by EIF2AK2 is dependent on the prior activation of EIF2AK2 by dsRNA.

The protein resides in the host nucleus. The protein localises to the host nucleolus. It localises to the host cytoplasm. Its subcellular location is the secreted. Functionally, transcriptional activator that increases RNA Pol II processivity, thereby increasing the level of full-length viral transcripts. Recognizes a hairpin structure at the 5'-LTR of the nascent viral mRNAs referred to as the transactivation responsive RNA element (TAR) and recruits the cyclin T1-CDK9 complex (P-TEFb complex) that will in turn hyperphosphorylate the RNA polymerase II to allow efficient elongation. The CDK9 component of P-TEFb and other Tat-activated kinases hyperphosphorylate the C-terminus of RNA Pol II that becomes stabilized and much more processive. Other factors such as HTATSF1/Tat-SF1, SUPT5H/SPT5, and HTATIP2 are also important for Tat's function. Besides its effect on RNA Pol II processivity, Tat induces chromatin remodeling of proviral genes by recruiting the histone acetyltransferases (HATs) CREBBP, EP300 and PCAF to the chromatin. This also contributes to the increase in proviral transcription rate, especially when the provirus integrates in transcriptionally silent region of the host genome. To ensure maximal activation of the LTR, Tat mediates nuclear translocation of NF-kappa-B by interacting with host RELA. Through its interaction with host TBP, Tat may also modulate transcription initiation. Tat can reactivate a latently infected cell by penetrating in it and transactivating its LTR promoter. In the cytoplasm, Tat is thought to act as a translational activator of HIV-1 mRNAs. Its function is as follows. Extracellular circulating Tat can be endocytosed by surrounding uninfected cells via the binding to several surface receptors such as CD26, CXCR4, heparan sulfate proteoglycans (HSPG) or LDLR. Neurons are rarely infected, but they internalize Tat via their LDLR. Through its interaction with nuclear HATs, Tat is potentially able to control the acetylation-dependent cellular gene expression. Modulates the expression of many cellular genes involved in cell survival, proliferation or in coding for cytokines or cytokine receptors. Tat plays a role in T-cell and neurons apoptosis. Tat induced neurotoxicity and apoptosis probably contribute to neuroAIDS. Circulating Tat also acts as a chemokine-like and/or growth factor-like molecule that binds to specific receptors on the surface of the cells, affecting many cellular pathways. In the vascular system, Tat binds to ITGAV/ITGB3 and ITGA5/ITGB1 integrins dimers at the surface of endothelial cells and competes with bFGF for heparin-binding sites, leading to an excess of soluble bFGF. This is Protein Tat from Human immunodeficiency virus type 1 group M subtype B (isolate SF33) (HIV-1).